The chain runs to 360 residues: NAD(P)H-quinone oxidoreductase subunit 1, chloroplastic (360 aa).

8 helical membrane-spanning segments follow: residues 29–49 (WIPL…LVIV), 96–116 (IWLF…AYLV), 128–148 (ISLG…GLLM), 166–186 (AAQA…ICLL), 204–224 (ILGW…IAAL), 255–277 (GLFY…ILYL), 297–317 (IFAA…FIFL), and 333–353 (LLDL…LLTA).

This sequence belongs to the complex I subunit 1 family. NDH is composed of at least 16 different subunits, 5 of which are encoded in the nucleus.

The protein localises to the plastid. The protein resides in the chloroplast thylakoid membrane. It carries out the reaction a plastoquinone + NADH + (n+1) H(+)(in) = a plastoquinol + NAD(+) + n H(+)(out). The enzyme catalyses a plastoquinone + NADPH + (n+1) H(+)(in) = a plastoquinol + NADP(+) + n H(+)(out). Its function is as follows. NDH shuttles electrons from NAD(P)H:plastoquinone, via FMN and iron-sulfur (Fe-S) centers, to quinones in the photosynthetic chain and possibly in a chloroplast respiratory chain. The immediate electron acceptor for the enzyme in this species is believed to be plastoquinone. Couples the redox reaction to proton translocation, and thus conserves the redox energy in a proton gradient. This is NAD(P)H-quinone oxidoreductase subunit 1, chloroplastic from Chlorokybus atmophyticus (Soil alga).